Consider the following 78-residue polypeptide: Translation initiation factor IF-1, chloroplastic (78 aa).

Positions 1–72 (MKKQNLIDME…TKGRITYRLR (72 aa)) constitute an S1-like domain.

It belongs to the IF-1 family. In terms of assembly, component of the 30S ribosomal translation pre-initiation complex which assembles on the 30S ribosome in the order IF-2 and IF-3, IF-1 and N-formylmethionyl-tRNA(fMet); mRNA recruitment can occur at any time during PIC assembly.

It localises to the plastid. It is found in the chloroplast. One of the essential components for the initiation of protein synthesis. Stabilizes the binding of IF-2 and IF-3 on the 30S subunit to which N-formylmethionyl-tRNA(fMet) subsequently binds. Helps modulate mRNA selection, yielding the 30S pre-initiation complex (PIC). Upon addition of the 50S ribosomal subunit IF-1, IF-2 and IF-3 are released leaving the mature 70S translation initiation complex. The polypeptide is Translation initiation factor IF-1, chloroplastic (Physcomitrium patens (Spreading-leaved earth moss)).